We begin with the raw amino-acid sequence, 205 residues long: N-(5'-phosphoribosyl)anthranilate isomerase (205 aa).

This sequence belongs to the TrpF family.

It catalyses the reaction N-(5-phospho-beta-D-ribosyl)anthranilate = 1-(2-carboxyphenylamino)-1-deoxy-D-ribulose 5-phosphate. It participates in amino-acid biosynthesis; L-tryptophan biosynthesis; L-tryptophan from chorismate: step 3/5. The chain is N-(5'-phosphoribosyl)anthranilate isomerase from Acidiphilium cryptum (strain JF-5).